We begin with the raw amino-acid sequence, 391 residues long: Trehalose-phosphate phosphatase (391 aa).

Residue Asp-147 is the Nucleophile of the active site. Asp-147, Asp-149, and Asp-330 together coordinate Mg(2+). Residue 147–149 participates in substrate binding; it reads DFD.

It belongs to the trehalose phosphatase family. Mg(2+) is required as a cofactor.

It catalyses the reaction alpha,alpha-trehalose 6-phosphate + H2O = alpha,alpha-trehalose + phosphate. The protein operates within glycan biosynthesis; trehalose biosynthesis. Removes the phosphate from trehalose 6-phosphate to produce free trehalose. The sequence is that of Trehalose-phosphate phosphatase (otsB) from Mycolicibacterium paratuberculosis (strain ATCC BAA-968 / K-10) (Mycobacterium paratuberculosis).